Consider the following 508-residue polypeptide: Cytochrome c-552 (508 aa).

The N-terminal stretch at 1 to 23 (MNKSYKILLTGSVIAIGAMGLMA) is a signal peptide. Position 103 (His-103) interacts with heme c. Heme contacts are provided by Cys-131, Cys-134, and Lys-135. The heme c site is built by Cys-169, Cys-172, His-173, Cys-211, Cys-214, and His-215. 4 residues coordinate Ca(2+): Glu-217, Tyr-218, Lys-274, and Gln-276. Tyr-218 provides a ligand contact to substrate. His-277 is a binding site for substrate. 9 residues coordinate heme c: His-288, Cys-295, Cys-298, His-299, His-313, Cys-326, Cys-329, His-330, and His-405. The disordered stretch occupies residues 485–508 (GRLDPKTLEGMSNKSSWSQTELSQ). A compositionally biased stretch (polar residues) spans 494 to 508 (GMSNKSSWSQTELSQ).

It belongs to the cytochrome c-552 family. Requires Ca(2+) as cofactor. Heme c is required as a cofactor.

The protein localises to the periplasm. It carries out the reaction 6 Fe(III)-[cytochrome c] + NH4(+) + 2 H2O = 6 Fe(II)-[cytochrome c] + nitrite + 8 H(+). Its pathway is nitrogen metabolism; nitrate reduction (assimilation). Functionally, catalyzes the reduction of nitrite to ammonia, consuming six electrons in the process. This is Cytochrome c-552 from Desulfotalea psychrophila (strain LSv54 / DSM 12343).